The sequence spans 504 residues: Maturase K (504 aa).

This sequence belongs to the intron maturase 2 family. MatK subfamily.

Its subcellular location is the plastid. It is found in the chloroplast. Usually encoded in the trnK tRNA gene intron. Probably assists in splicing its own and other chloroplast group II introns. The chain is Maturase K from Pentaplaris doroteae.